The sequence spans 166 residues: Interferon gamma (166 aa).

The N-terminal stretch at M1 to G23 is a signal peptide. At Q24 the chain carries Pyrrolidone carboxylic acid. 2 N-linked (GlcNAc...) asparagine glycosylation sites follow: N39 and N106.

This sequence belongs to the type II (or gamma) interferon family. Homodimer. Interacts with IFNGR1 (via extracellular domain); this interaction promotes IFNGR1 dimerization. In terms of tissue distribution, released primarily from activated T lymphocytes.

The protein localises to the secreted. Functionally, type II interferon produced by immune cells such as T-cells and NK cells that plays crucial roles in antimicrobial, antiviral, and antitumor responses by activating effector immune cells and enhancing antigen presentation. Primarily signals through the JAK-STAT pathway after interaction with its receptor IFNGR1 to affect gene regulation. Upon IFNG binding, IFNGR1 intracellular domain opens out to allow association of downstream signaling components JAK2, JAK1 and STAT1, leading to STAT1 activation, nuclear translocation and transcription of IFNG-regulated genes. Many of the induced genes are transcription factors such as IRF1 that are able to further drive regulation of a next wave of transcription. Plays a role in class I antigen presentation pathway by inducing a replacement of catalytic proteasome subunits with immunoproteasome subunits. In turn, increases the quantity, quality, and repertoire of peptides for class I MHC loading. Increases the efficiency of peptide generation also by inducing the expression of activator PA28 that associates with the proteasome and alters its proteolytic cleavage preference. Up-regulates as well MHC II complexes on the cell surface by promoting expression of several key molecules such as cathepsins B/CTSB, H/CTSH, and L/CTSL. Participates in the regulation of hematopoietic stem cells during development and under homeostatic conditions by affecting their development, quiescence, and differentiation. The sequence is that of Interferon gamma (IFNG) from Bos taurus (Bovine).